A 288-amino-acid polypeptide reads, in one-letter code: Glucose uptake protein GlcU (288 aa).

Transmembrane regions (helical) follow at residues 4–26, 33–51, 56–75, 82–104, 114–136, 148–170, 180–197, 206–225, 230–252, and 264–283; these read LIAL…VGGG, GTTF…TGNA, LTII…GQGY, LIGV…TLFS, GVQV…LTSI, NFGK…VVVA, ALFF…ILSA, TLWN…FMFY, VGVA…GGIF, and IGIW…SEIL.

It belongs to the GRP transporter (TC 2.A.7.5) family.

The protein localises to the cell membrane. Its function is as follows. Involved in the uptake of glucose. This is Glucose uptake protein GlcU (glcU) from Staphylococcus xylosus.